The primary structure comprises 118 residues: MVRIAGVNVPDRKHAVIALMSIYGIGRSRAKLICLSIGVDEYTKIGQLSDVYIDKMRNEIAKYVVEGDLRREVTLNIKRLIDLGTYRGLRHRRNLPVRGQRTRTNARTRKGPKKLINK.

Positions 95-118 (LPVRGQRTRTNARTRKGPKKLINK) are disordered.

Belongs to the universal ribosomal protein uS13 family. Part of the 30S ribosomal subunit. Forms a loose heterodimer with protein S19. Forms two bridges to the 50S subunit in the 70S ribosome.

Its function is as follows. Located at the top of the head of the 30S subunit, it contacts several helices of the 16S rRNA. In the 70S ribosome it contacts the 23S rRNA (bridge B1a) and protein L5 of the 50S subunit (bridge B1b), connecting the 2 subunits; these bridges are implicated in subunit movement. Contacts the tRNAs in the A and P-sites. The polypeptide is Small ribosomal subunit protein uS13 (Blochmanniella floridana).